The chain runs to 509 residues: Erythropoietin receptor (509 aa).

Positions 1 to 24 (MYHFGATLWPGVGSLCLLLAGATW) are cleaved as a signal peptide. Over 25–251 (APSPNSPDAK…SLLTASDLDP (227 aa)) the chain is Extracellular. Cystine bridges form between Cys52-Cys62 and Cys91-Cys107. In terms of domain architecture, Fibronectin type-III spans 148–248 (PPAGLLARRA…EPASLLTASD (101 aa)). N-linked (GlcNAc...) asparagine glycosylation is present at Asn184. A WSXWS motif motif is present at residues 234 to 238 (WSAWS). A helical membrane pass occupies residues 252–274 (LILTLSLILVLILLLLAVLALLS). The Cytoplasmic portion of the chain corresponds to 275-509 (HRRTLKQKIW…PSPPNYVTCS (235 aa)). Residue Lys282 forms a Glycyl lysine isopeptide (Lys-Gly) (interchain with G-Cter in ubiquitin) linkage. Positions 283–291 (IWPGIPSPE) match the Box 1 motif motif. Tyr369 and Tyr427 each carry phosphotyrosine; by JAK2. The ITIM motif motif lies at 453 to 458 (LKYLYL). Lys454 participates in a covalent cross-link: Glycyl lysine isopeptide (Lys-Gly) (interchain with G-Cter in ubiquitin). A phosphotyrosine; by JAK2 mark is found at Tyr455, Tyr457, Tyr469, Tyr486, Tyr490, and Tyr505. Positions 467–509 (TDYSSGGSQETQGGSSSGPYSNPYENSLVPAPEPSPPNYVTCS) are disordered. Residues 470-493 (SSGGSQETQGGSSSGPYSNPYENS) show a composition bias toward low complexity.

This sequence belongs to the type I cytokine receptor family. Type 1 subfamily. In terms of assembly, forms homodimers on EPO stimulation. The tyrosine-phosphorylated form interacts with several SH2 domain-containing proteins including LYN, the adapter protein SH2B2, PTPN6, PTPN11, JAK2, PI3 kinases, STAT5A/B, SOCS3, CRKL. Interacts with INPP5D/SHIP1. SH2B2 binding inhibits the JAK-STAT signaling. Interacts with RHEX; this interaction occurs in a erythropoietin (EPO)-dependent manner. Interacts with ATXN2L. On EPO stimulation, phosphorylated on C-terminal tyrosine residues by JAK2. The phosphotyrosine motifs are also recruitment sites for several SH2-containing proteins and adapter proteins which mediate cell proliferation. Phosphorylation on Tyr-455 is required for PTPN6 interaction, Tyr-427 for PTPN11. Tyr-427 is also required for SOCS3 binding, but Tyr-455/Tyr-457 motif is the preferred binding site. In terms of processing, ubiquitinated by the ECS(SOCS2) complex following ligand-binding and phosphorylation by JAK2, leading to its degradation by the proteasome. Regulation by the ECS(SOCS2) complex acts as a negative feedback loop of erythropoietin-mediated signaling pathway. Ubiquitination at Lys-282 mediates receptor internalization, whereas ubiquitination at Lys-454 promotes trafficking of activated receptors to the lysosomes for degradation. Ubiquitinated by NOSIP; appears to be either multi-monoubiquitinated or polyubiquitinated. Ubiquitination mediates proliferation and survival of EPO-dependent cells.

Its subcellular location is the cell membrane. Receptor for erythropoietin, which mediates erythropoietin-induced erythroblast proliferation and differentiation. Upon EPO stimulation, EPOR dimerizes triggering the JAK2/STAT5 signaling cascade. In some cell types, can also activate STAT1 and STAT3. May also activate the LYN tyrosine kinase. Functionally, isoform EPOR-T acts as a dominant-negative receptor of EPOR-mediated signaling. The protein is Erythropoietin receptor (EPOR) of Sus scrofa (Pig).